The following is a 369-amino-acid chain: UDP-N-acetyl-3-dehydro-alpha-D-glucosamine 3-aminotranferase (369 aa).

An N6-(pyridoxal phosphate)lysine modification is found at lysine 190.

Belongs to the DegT/DnrJ/EryC1 family. Pyridoxal 5'-phosphate is required as a cofactor.

It catalyses the reaction UDP-2-acetamido-3-amino-2,3-dideoxy-alpha-D-glucopyranose + 2-oxoglutarate = UDP-2-acetamido-3-dehydro-2-deoxy-alpha-D-glucopyranose + L-glutamate. Its pathway is bacterial outer membrane biogenesis; LPS lipid A biosynthesis. Functionally, aminotranferase involved in the synthesis of 2,3-diamino-2,3-dideoxy-D-glucopyranose (GlcN3N), which is a component of lipid A in some species. Catalyzes the amination of UDP-2-acetamido-3-dehydro-2-deoxy-alpha-D-glucopyranose (UDP-3-oxo-GlcNAc) to UDP-2-acetamido-3-amino-2,3-dideoxy-alpha-D-glucopyranose (UDP-GlcNAc3N), using L-glutamate as the amine donor. Other amine donors, such as alanine and glutamine, can substitute for glutamate, but product formation is slower. This chain is UDP-N-acetyl-3-dehydro-alpha-D-glucosamine 3-aminotranferase, found in Acidithiobacillus ferrooxidans (strain ATCC 23270 / DSM 14882 / CIP 104768 / NCIMB 8455) (Ferrobacillus ferrooxidans (strain ATCC 23270)).